A 574-amino-acid polypeptide reads, in one-letter code: Pyruvate kinase PKLR (574 aa).

Residues serine 2, serine 19, serine 26, and serine 43 each carry the phosphoserine modification. Arginine 116 lines the substrate pocket. Residues asparagine 118, serine 120, aspartate 156, and threonine 157 each coordinate K(+). Residue 118-121 coordinates ATP; sequence NFSH. Residues arginine 163 and lysine 250 each coordinate ATP. A Phosphoserine modification is found at serine 292. Position 313 (lysine 313) interacts with substrate. Glutamate 315 is a Mn(2+) binding site. The substrate site is built by glycine 338, aspartate 339, and threonine 371. Aspartate 339 contributes to the Mn(2+) binding site. Beta-D-fructose 1,6-bisphosphate-binding positions include 475 to 480, tryptophan 525, arginine 532, and 559 to 564; these read TTTGRS and RPGSGY.

This sequence belongs to the pyruvate kinase family. In terms of assembly, homotetramer. Mg(2+) serves as cofactor. Mn(2+) is required as a cofactor. The cofactor is K(+).

The enzyme catalyses pyruvate + ATP = phosphoenolpyruvate + ADP + H(+). It functions in the pathway carbohydrate degradation; glycolysis; pyruvate from D-glyceraldehyde 3-phosphate: step 5/5. With respect to regulation, allosterically activated by fructose 1,6-bisphosphate. In terms of biological role, pyruvate kinase that catalyzes the conversion of phosphoenolpyruvate to pyruvate with the synthesis of ATP, and which plays a key role in glycolysis. The polypeptide is Pyruvate kinase PKLR (PKLR) (Homo sapiens (Human)).